The sequence spans 318 residues: Protoheme IX farnesyltransferase (318 aa).

9 consecutive transmembrane segments (helical) span residues 29-49 (IIPL…QGQV), 51-71 (PVLL…AQTI), 102-122 (LIFA…FANL), 123-143 (LAAS…THWL), 151-171 (IVIG…AVTG), 179-199 (LIFA…ALMI), 219-239 (ATVK…LLLV), 241-261 (PLHS…AVFI), and 280-300 (LFLY…IDSL).

This sequence belongs to the UbiA prenyltransferase family. Protoheme IX farnesyltransferase subfamily.

The protein localises to the cell inner membrane. It catalyses the reaction heme b + (2E,6E)-farnesyl diphosphate + H2O = Fe(II)-heme o + diphosphate. The protein operates within porphyrin-containing compound metabolism; heme O biosynthesis; heme O from protoheme: step 1/1. Functionally, converts heme B (protoheme IX) to heme O by substitution of the vinyl group on carbon 2 of heme B porphyrin ring with a hydroxyethyl farnesyl side group. This is Protoheme IX farnesyltransferase from Trichormus variabilis (strain ATCC 29413 / PCC 7937) (Anabaena variabilis).